Here is a 335-residue protein sequence, read N- to C-terminus: Phosphate acyltransferase (335 aa).

It belongs to the PlsX family. Homodimer. Probably interacts with PlsY.

It is found in the cytoplasm. It catalyses the reaction a fatty acyl-[ACP] + phosphate = an acyl phosphate + holo-[ACP]. Its pathway is lipid metabolism; phospholipid metabolism. Functionally, catalyzes the reversible formation of acyl-phosphate (acyl-PO(4)) from acyl-[acyl-carrier-protein] (acyl-ACP). This enzyme utilizes acyl-ACP as fatty acyl donor, but not acyl-CoA. The chain is Phosphate acyltransferase from Leptospira interrogans serogroup Icterohaemorrhagiae serovar copenhageni (strain Fiocruz L1-130).